The primary structure comprises 1755 residues: Transposon Ty1-GR1 Gag-Pol polyprotein (1755 aa).

A compositionally biased stretch (low complexity) spans 1–16; it reads MESQQLSQHSHISHGS. Disordered regions lie at residues 1–93, 126–173, and 352–421; these read MESQ…MMTQ, PQSQ…RPPP, and GSRN…SKST. Composition is skewed to polar residues over residues 48-60, 71-93, and 127-152; these read TKAN…TPAS, SPQT…MMTQ, and QSQF…GNTF. Low complexity predominate over residues 153-165; sequence TDSSSADSDMTST. The tract at residues 299-401 is RNA-binding; it reads NNGIHINNKV…NSKSKTARAH (103 aa). Positions 402–418 are enriched in low complexity; it reads NVSTSNNSPSTDNDSIS. A Phosphoserine modification is found at Ser416. Asp461 (for protease activity; shared with dimeric partner) is an active-site residue. Residues 583–640 form an integrase-type zinc finger-like region; the sequence is NVHTSESTRKYPYPFIHRMLAHANAQTIRYSLKNNTITYFNESDVDWSSAIDYQCPDC. One can recognise an Integrase catalytic domain in the interval 660-835; that stretch reads NSYEPFQYLH…AGLDISTLLP (176 aa). Mg(2+)-binding residues include Asp671 and Asp736. Disordered regions lie at residues 956–1087, 1092–1111, and 1130–1187; these read SKAV…ETEK, RSPS…NIVP, and DLPL…DNET. Residues 960-969 show a composition bias toward low complexity; the sequence is SPTDSTPPST. Residues 1005–1015 are compositionally biased toward polar residues; it reads STPQISNIEST. Basic and acidic residues predominate over residues 1038-1053; that stretch reads ESSHASKSKDFRHSDS. Polar residues-rich tracts occupy residues 1054-1082 and 1101-1111; these read YSEN…QISD and PENNSSHNIVP. Residues 1178–1212 carry the Bipartite nuclear localization signal motif; it reads KKRSLEDNETEIKVSRDTWNTKNMRSLEPPRSKKR. The Reverse transcriptase Ty1/copia-type domain occupies 1338-1476; it reads NNYYITQLDI…DILGLEIKYQ (139 aa). Mg(2+)-binding residues include Asp1346, Asp1427, Asp1428, Asp1610, Glu1652, and Asp1685. Residues 1610–1752 form the RNase H Ty1/copia-type domain; it reads DASYGNQPYY…IKTFKLLTNK (143 aa).

The capsid protein forms a homotrimer, from which the VLPs are assembled. The protease is a homodimer, whose active site consists of two apposed aspartic acid residues. Post-translationally, initially, virus-like particles (VLPs) are composed of the structural unprocessed proteins Gag and Gag-Pol, and also contain the host initiator methionine tRNA (tRNA(i)-Met) which serves as a primer for minus-strand DNA synthesis, and a dimer of genomic Ty RNA. Processing of the polyproteins occurs within the particle and proceeds by an ordered pathway, called maturation. First, the protease (PR) is released by autocatalytic cleavage of the Gag-Pol polyprotein yielding capsid protein p45 and a Pol-p154 precursor protein. This cleavage is a prerequisite for subsequent processing of Pol-p154 at the remaining sites to release the mature structural and catalytic proteins. Maturation takes place prior to the RT reaction and is required to produce transposition-competent VLPs.

Its subcellular location is the cytoplasm. It localises to the nucleus. The enzyme catalyses DNA(n) + a 2'-deoxyribonucleoside 5'-triphosphate = DNA(n+1) + diphosphate. It catalyses the reaction Endonucleolytic cleavage to 5'-phosphomonoester.. Capsid protein (CA) is the structural component of the virus-like particle (VLP), forming the shell that encapsulates the retrotransposons dimeric RNA genome. The particles are assembled from trimer-clustered units and there are holes in the capsid shells that allow for the diffusion of macromolecules. CA also has nucleocapsid-like chaperone activity, promoting primer tRNA(i)-Met annealing to the multipartite primer-binding site (PBS), dimerization of Ty1 RNA and initiation of reverse transcription. Functionally, the aspartyl protease (PR) mediates the proteolytic cleavages of the Gag and Gag-Pol polyproteins after assembly of the VLP. Its function is as follows. Reverse transcriptase/ribonuclease H (RT) is a multifunctional enzyme that catalyzes the conversion of the retro-elements RNA genome into dsDNA within the VLP. The enzyme displays a DNA polymerase activity that can copy either DNA or RNA templates, and a ribonuclease H (RNase H) activity that cleaves the RNA strand of RNA-DNA heteroduplexes during plus-strand synthesis and hydrolyzes RNA primers. The conversion leads to a linear dsDNA copy of the retrotransposon that includes long terminal repeats (LTRs) at both ends. In terms of biological role, integrase (IN) targets the VLP to the nucleus, where a subparticle preintegration complex (PIC) containing at least integrase and the newly synthesized dsDNA copy of the retrotransposon must transit the nuclear membrane. Once in the nucleus, integrase performs the integration of the dsDNA into the host genome. This Saccharomyces cerevisiae (strain ATCC 204508 / S288c) (Baker's yeast) protein is Transposon Ty1-GR1 Gag-Pol polyprotein (TY1B-GR1).